The following is a 197-amino-acid chain: uncharacterized protein (197 aa).

The protein belongs to the NAD(P)H dehydrogenase (quinone) family.

This is an uncharacterized protein from Bacillus subtilis (strain 168).